A 1073-amino-acid polypeptide reads, in one-letter code: Carbamoyl phosphate synthase large chain (1073 aa).

Residues 1-399 (MPKREDIKKV…SLLKAFKSLD (399 aa)) are carboxyphosphate synthetic domain. Arginine 129, arginine 169, glycine 175, glycine 176, glutamate 208, valine 210, glutamate 215, glycine 241, valine 242, histidine 243, glutamine 284, and glutamate 296 together coordinate ATP. One can recognise an ATP-grasp 1 domain in the interval 133 to 325 (KETMLSIGEK…IARVTAKIAI (193 aa)). Residues glutamine 284, glutamate 296, and asparagine 298 each coordinate Mg(2+). Mn(2+) contacts are provided by glutamine 284, glutamate 296, and asparagine 298. The oligomerization domain stretch occupies residues 400–540 (IDNQLGIKRW…YSTYEDTCET (141 aa)). Residues 541–931 (NSTDKKKILI…YKAELAADNL (391 aa)) form a carbamoyl phosphate synthetic domain region. The ATP-grasp 2 domain maps to 672–863 (YLLMQELGIP…LAKIAAKVIA (192 aa)). ATP is bound by residues arginine 708, aspartate 747, leucine 749, glutamate 754, glycine 779, valine 780, histidine 781, serine 782, glutamine 822, and glutamate 834. Mg(2+) contacts are provided by glutamine 822, glutamate 834, and asparagine 836. Mn(2+) is bound by residues glutamine 822, glutamate 834, and asparagine 836. An MGS-like domain is found at 930 to 1071 (NLLPLTGKVF…NEYHKEMEQK (142 aa)). The segment at 932–1073 (LPLTGKVFLS…YHKEMEQKEE (142 aa)) is allosteric domain.

It belongs to the CarB family. Composed of two chains; the small (or glutamine) chain promotes the hydrolysis of glutamine to ammonia, which is used by the large (or ammonia) chain to synthesize carbamoyl phosphate. Tetramer of heterodimers (alpha,beta)4. The cofactor is Mg(2+). It depends on Mn(2+) as a cofactor.

The catalysed reaction is hydrogencarbonate + L-glutamine + 2 ATP + H2O = carbamoyl phosphate + L-glutamate + 2 ADP + phosphate + 2 H(+). It carries out the reaction hydrogencarbonate + NH4(+) + 2 ATP = carbamoyl phosphate + 2 ADP + phosphate + 2 H(+). Its pathway is amino-acid biosynthesis; L-arginine biosynthesis; carbamoyl phosphate from bicarbonate: step 1/1. The protein operates within pyrimidine metabolism; UMP biosynthesis via de novo pathway; (S)-dihydroorotate from bicarbonate: step 1/3. Its function is as follows. Large subunit of the glutamine-dependent carbamoyl phosphate synthetase (CPSase). CPSase catalyzes the formation of carbamoyl phosphate from the ammonia moiety of glutamine, carbonate, and phosphate donated by ATP, constituting the first step of 2 biosynthetic pathways, one leading to arginine and/or urea and the other to pyrimidine nucleotides. The large subunit (synthetase) binds the substrates ammonia (free or transferred from glutamine from the small subunit), hydrogencarbonate and ATP and carries out an ATP-coupled ligase reaction, activating hydrogencarbonate by forming carboxy phosphate which reacts with ammonia to form carbamoyl phosphate. In Methanosarcina mazei (strain ATCC BAA-159 / DSM 3647 / Goe1 / Go1 / JCM 11833 / OCM 88) (Methanosarcina frisia), this protein is Carbamoyl phosphate synthase large chain.